Consider the following 273-residue polypeptide: MPLPLLLAALCLAASPAPARACQLPSEWRPLSEGCRAELAETIVYAKVLALHPEVPGLYNYLPWQYQAGEGGLFYSAEVEMLCDQAWGSMLEVPAGSRLNLTGLGYFSCHSHTVVQDYSYFFFVRMDENYNLLPHGVNFQDAIFPDTQENRRMFSSLFQFANCSQGQQLTTFSSDWEVQEDNRLMCSSVQKALFEEEDHVKKLQQKVATLEKRNRQLRERVKKVKRSLRQARKNSRHLELVNQKLNEKLGASSAQQHINALGREPVRAPYLHG.

A signal peptide spans 1-21 (MPLPLLLAALCLAASPAPARA). Asparagine 100 carries an N-linked (GlcNAc...) asparagine glycan. A coiled-coil region spans residues 188–250 (SVQKALFEEE…VNQKLNEKLG (63 aa)).

As to quaternary structure, homodimer. Post-translationally, N-glycosylated. Expressed in aorta and adipose tissue. Enriched in mature adipocytes. Over-expressed in adipose tissue from either hormonally-induced or nutritionally-regulated obese mice models.

Its subcellular location is the secreted. Functionally, negatively regulates TNF-alpha-induced pro-inflammatory response in endothelial cells (ECs) via inhibition of TNF-alpha-induced NF-kappaB activation in ECs. Positively regulates lipid accumulation in adipose cells. The chain is Coiled-coil domain-containing protein 3 (Ccdc3) from Mus musculus (Mouse).